Here is a 265-residue protein sequence, read N- to C-terminus: Putative Tubby-like protein 4 (265 aa).

The F-box domain maps to 1 to 44 (MPPELLRDVLMRIERSEDTWPSRKNVVSCVGVCKNWRQIFKEIV). An FBD domain is found at 228–250 (SYELKLALYFAKNSAILKKFVLR).

This sequence belongs to the TUB family.

In Arabidopsis thaliana (Mouse-ear cress), this protein is Putative Tubby-like protein 4.